Here is a 267-residue protein sequence, read N- to C-terminus: MPELPEVELTRRRLERDITGKQVQQVLVRAPKLRLPVPPELEEALKGRTVRAVERRGKYLLLECEAGWLIVHLGMTGFLRLLHTPQLPGKHDHVDIVFTDGSVLRFHDPRKFGTIAWTTDSLDKHPLLAGIGPEPLTAAFSGAYLFRVSRTRRVVVKLLIMNMAIVAGVGNIYANEALFRAGIRPDRAASSLSRTECERLAVTIREVLQESIDLGSTYRVEEGTVTYHPLAFDVYGRGHGTCTSCGGALEAVRLGNRSTVFCPRCQQ.

Residue Pro-2 is the Schiff-base intermediate with DNA of the active site. Glu-3 acts as the Proton donor in catalysis. The Proton donor; for beta-elimination activity role is filled by Lys-58. 3 residues coordinate DNA: His-91, Arg-110, and Arg-152. An FPG-type zinc finger spans residues 233 to 267; sequence DVYGRGHGTCTSCGGALEAVRLGNRSTVFCPRCQQ. Catalysis depends on Arg-257, which acts as the Proton donor; for delta-elimination activity.

Belongs to the FPG family. In terms of assembly, monomer. Zn(2+) serves as cofactor.

It catalyses the reaction Hydrolysis of DNA containing ring-opened 7-methylguanine residues, releasing 2,6-diamino-4-hydroxy-5-(N-methyl)formamidopyrimidine.. The enzyme catalyses 2'-deoxyribonucleotide-(2'-deoxyribose 5'-phosphate)-2'-deoxyribonucleotide-DNA = a 3'-end 2'-deoxyribonucleotide-(2,3-dehydro-2,3-deoxyribose 5'-phosphate)-DNA + a 5'-end 5'-phospho-2'-deoxyribonucleoside-DNA + H(+). Functionally, involved in base excision repair of DNA damaged by oxidation or by mutagenic agents. Acts as a DNA glycosylase that recognizes and removes damaged bases. Has a preference for oxidized purines, such as 7,8-dihydro-8-oxoguanine (8-oxoG). Has AP (apurinic/apyrimidinic) lyase activity and introduces nicks in the DNA strand. Cleaves the DNA backbone by beta-delta elimination to generate a single-strand break at the site of the removed base with both 3'- and 5'-phosphates. The protein is Formamidopyrimidine-DNA glycosylase of Pelobacter propionicus (strain DSM 2379 / NBRC 103807 / OttBd1).